The primary structure comprises 737 residues: MKKESMSRIERRKAQQRKKTPVQWKKSTTLFSSALIVSSVGTPVALLPVTAEATEEQPTNAEVAQAPTTETGLVETPTTETTPGTTEQPTTDSSTTTESTTESSKETPTTPSTEQPTADSTTPVESGTTDSSVAEITPVAPSATESEAAPAVTPDDEVKVPEARVASAQTFSALSPTQSPSEFIAELARCAQPIAQANDLYASVMMAQAIVESGWGASTLSKAPNYNLFGIKGSYNGQSVYMDTWEYLNGKWLVKKEPFRKYPSYMESFQDNAHVLKTTSFQAGVYYYAGAWKSNTSSYRDATAWLTGRYATDPSYNAKLNNVITAYNLTQYDTPSSGGNTGGGTVNPGTGGSNNQSGTNTYYTVKSGDTLNKIAAQYGVSVANLRSWNGISGDLIFVGQKLIVKKGASGNTGGSGSGGSNNNQSGTNTYYTVKSGDTLNKIAAQYGVSVANLRSWNGISGDLIFVGQKLIVKKGASGNTGGSNNGGSNNNQSGTNTYYTIKSGDTLNKIAAQYGVSVANLRSWNGISGDLIFAGQKIIVKKGTSGNTGGSSNGGSNNNQSGTNTYYTIKSGDTLNKISAQFGVSVANLQAWNNISGSLIFAGQKIIVKKGANSGSTNTNKPTNNGGGATTSYTIKSGDTLNKISAQFGVSVANLRSWNGIKGDLIFAGQTIIVKKGASAGGNASSTNSASGKRHTVKSGDSLWGLSMQYGISIQKIKQLNGLSGDTIYIGQTLKVG.

Residues 1–13 show a composition bias toward basic and acidic residues; that stretch reads MKKESMSRIERRK. 3 disordered regions span residues 1–28, 51–132, and 335–360; these read MKKESMSRIERRKAQQRKKTPVQWKKST, AEAT…TDSS, and PSSGGNTGGGTVNPGTGGSNNQSGTN. The N-terminal stretch at 1–53 is a signal peptide; it reads MKKESMSRIERRKAQQRKKTPVQWKKSTTLFSSALIVSSVGTPVALLPVTAEA. Positions 67 to 117 are enriched in low complexity; it reads PTTETGLVETPTTETTPGTTEQPTTDSSTTTESTTESSKETPTTPSTEQPT. Over residues 118-132 the composition is skewed to polar residues; it reads ADSTTPVESGTTDSS. Over residues 339-352 the composition is skewed to gly residues; that stretch reads GNTGGGTVNPGTGG. Residues 361–404 form the LysM 1 domain; the sequence is TYYTVKSGDTLNKIAAQYGVSVANLRSWNGISGDLIFVGQKLIV. A disordered region spans residues 409 to 429; that stretch reads SGNTGGSGSGGSNNNQSGTNT. The span at 410 to 419 shows a compositional bias: gly residues; sequence GNTGGSGSGG. A compositionally biased stretch (low complexity) spans 420-429; the sequence is SNNNQSGTNT. 5 consecutive LysM domains span residues 429 to 472, 497 to 540, 565 to 608, 631 to 674, and 693 to 736; these read TYYT…KLIV, TYYT…KIIV, TSYT…TIIV, and KRHT…TLKV.

This sequence belongs to the glycosyl hydrolase 73 family.

The protein localises to the secreted. Its function is as follows. Hydrolyzes the cell wall of E.faecalis and M.lysodeikticus. May play an important role in cell wall growth and cell separation. The chain is Autolysin from Enterococcus faecalis (strain ATCC 700802 / V583).